The following is a 796-amino-acid chain: Probable coatomer subunit beta' (796 aa).

6 WD repeats span residues 4–42 (LDFQRKLLSHTERVKAVDFHPTEPWVIASHYNGQVGIWN), 46–84 (QTLVRSFDINDVPIRACAFIARKNWFVCGSDDFQVRVYN), 88–126 (GEKVTQFEAHPDYIRALVVHPTQPFLLTSSDDMTIKCFN), 131–170 (WKCVQTFEGHSRYVMSLAINPKDTNTFASSCLDGTVKVWS), 172–214 (GSSV…KVWD), and 218–256 (KACVRILEGHTNNVSFAFFHSKFPIIISGSEDGTVKIWH).

It belongs to the WD repeat COPB2 family. As to quaternary structure, oligomeric complex that consists of at least the alpha, beta, beta', gamma, delta, epsilon and zeta subunits.

It localises to the cytoplasm. Its subcellular location is the golgi apparatus membrane. The protein localises to the cytoplasmic vesicle. The protein resides in the COPI-coated vesicle membrane. Its function is as follows. The coatomer is a cytosolic protein complex that binds to dilysine motifs and reversibly associates with Golgi non-clathrin-coated vesicles, which further mediate biosynthetic protein transport from the ER, via the Golgi up to the trans Golgi network. Coatomer complex is required for budding from Golgi membranes, and is essential for the retrograde Golgi-to-ER transport of dilysine-tagged proteins. The chain is Probable coatomer subunit beta' (sec27) from Schizosaccharomyces pombe (strain 972 / ATCC 24843) (Fission yeast).